The primary structure comprises 368 residues: tRNA/tmRNA (uracil-C(5))-methyltransferase (368 aa).

S-adenosyl-L-methionine is bound by residues Q192, Y220, N225, E241, and D301. Catalysis depends on C326, which acts as the Nucleophile. E360 functions as the Proton acceptor in the catalytic mechanism.

Belongs to the class I-like SAM-binding methyltransferase superfamily. RNA M5U methyltransferase family. TrmA subfamily.

The catalysed reaction is uridine(54) in tRNA + S-adenosyl-L-methionine = 5-methyluridine(54) in tRNA + S-adenosyl-L-homocysteine + H(+). It carries out the reaction uridine(341) in tmRNA + S-adenosyl-L-methionine = 5-methyluridine(341) in tmRNA + S-adenosyl-L-homocysteine + H(+). Dual-specificity methyltransferase that catalyzes the formation of 5-methyluridine at position 54 (m5U54) in all tRNAs, and that of position 341 (m5U341) in tmRNA (transfer-mRNA). This is tRNA/tmRNA (uracil-C(5))-methyltransferase from Actinobacillus pleuropneumoniae serotype 5b (strain L20).